Reading from the N-terminus, the 164-residue chain is Cyclin-dependent kinase inhibitor 1 (164 aa).

At Ser2 the chain carries N-acetylserine. Ser2 participates in a covalent cross-link: Glycyl serine ester (Ser-Gly) (interchain with G-Cter in ubiquitin). The C4-type zinc-finger motif lies at 13-41; that stretch reads CGSKACRRLFGPVDSEQLSRDCDALMAGC. The interval 17-24 is required for binding cyclins; the sequence is ACRRLFGP. The segment at 53-58 is required for binding CDKs; the sequence is FVTETP. The disordered stretch occupies residues 76–164; it reads LYLPTGPRRG…RRLIFSKRKP (89 aa). Thr80 bears the Phosphothreonine; by LKB1 mark. Residue Ser114 is modified to Phosphoserine; by GSK3-beta. Residue Ser130 is modified to Phosphoserine. The PIP-box K+4 motif motif lies at 140 to 164; it reads RKRRQTSMTDFYHSKRRLIFSKRKP. Residues 141-156 carry the Nuclear localization signal motif; the sequence is KRRQTSMTDFYHSKRR. Position 145 is a phosphothreonine; by PKA, PKB/AKT1, PIM1 and PIM2 (Thr145). Ser146 bears the Phosphoserine; by PKC and NUAK1 mark. An interaction with TRIM39 region spans residues 152 to 164; that stretch reads HSKRRLIFSKRKP. Residues 153–164 are compositionally biased toward basic residues; sequence SKRRLIFSKRKP. The residue at position 160 (Ser160) is a Phosphoserine; by PKC; in vitro.

Belongs to the CDI family. Interacts with HDAC1; the interaction is prevented by competitive binding of C10orf90/FATS to HDAC1 facilitating acetylation and protein stabilization of CDKN1A/p21. Interacts with MKRN1. Interacts with PSMA3. Interacts with PCNA. Component of the ternary complex, cyclin D-CDK4-CDKN1A. Interacts (via its N-terminal domain) with CDK4; the interaction promotes the assembly of the cyclin D-CDK4 complex, its nuclear translocation and promotes the cyclin D-dependent enzyme activity of CDK4. Binding to CDK2 leads to CDK2/cyclin E inactivation at the G1-S phase DNA damage checkpoint, thereby arresting cells at the G1-S transition during DNA repair. Interacts with PIM1. Interacts with STK11 and NUAK1. Interacts wih DTL. Interacts with isoform 1 and isoform 2 of TRIM39. Interacts with PKP3; the interaction sequesters CDKN1A to the cytoplasm thereby repressing its role as an inhibitor of CDK4- and CDK6-driven RB1 phosphorylation. In terms of processing, phosphorylation of Thr-145 by Akt or of Ser-146 by PKC impairs binding to PCNA. Phosphorylation at Ser-114 by GSK3-beta enhances ubiquitination by the DCX(DTL) complex. Phosphorylation of Thr-145 by PIM2 enhances CDKN1A stability and inhibits cell proliferation. Phosphorylation of Thr-145 by PIM1 results in the relocation of CDKN1A to the cytoplasm and enhanced CDKN1A protein stability. UV radiation-induced phosphorylation at Thr-80 by LKB1 and at Ser-146 by NUAK1 leads to its degradation. Post-translationally, ubiquitinated by MKRN1; leading to polyubiquitination and 26S proteasome-dependent degradation. Ubiquitinated by the DCX(DTL) complex, also named CRL4(CDT2) complex, leading to its degradation during S phase or following UV irradiation. Ubiquitination by the DCX(DTL) complex is essential to control replication licensing and is PCNA-dependent: interacts with PCNA via its PIP-box, while the presence of the containing the 'K+4' motif in the PIP box, recruit the DCX(DTL) complex, leading to its degradation. Ubiquitination at Ser-2 leads to degradation by the proteasome pathway. Ubiquitinated by RNF114; leading to proteasomal degradation. Acetylation leads to protein stability. Acetylated in vitro on Lys-141, Lys-154, Lys-161 and Lys-163. Deacetylation by HDAC1 is prevented by competitive binding of C10orf90/FATS to HDAC1. Expressed in all adult tissues, with 5-fold lower levels observed in the brain.

Its subcellular location is the cytoplasm. The protein resides in the nucleus. Functionally, plays an important role in controlling cell cycle progression and DNA damage-induced G2 arrest. Involved in p53/TP53 mediated inhibition of cellular proliferation in response to DNA damage. Also involved in p53-independent DNA damage-induced G2 arrest mediated by CREB3L1 in astrocytes and osteoblasts. Binds to and inhibits cyclin-dependent kinase activity, preventing phosphorylation of critical cyclin-dependent kinase substrates and blocking cell cycle progression. Functions in the nuclear localization and assembly of cyclin D-CDK4 complex and promotes its kinase activity towards RB1. At higher stoichiometric ratios, inhibits the kinase activity of the cyclin D-CDK4 complex. Inhibits DNA synthesis by DNA polymerase delta by competing with POLD3 for PCNA binding. Negatively regulates the CDK4- and CDK6-driven phosphorylation of RB1 in keratinocytes, thereby resulting in the release of E2F1 and subsequent transcription of E2F1-driven G1/S phase promoting genes. The chain is Cyclin-dependent kinase inhibitor 1 from Homo sapiens (Human).